The chain runs to 574 residues: MCRTLLGVAFLVVTVLSQGEKDLIQNLPGLLFKANFKSYSGYVDANANGTWKMHYMLTESRSNPDTDPLLVWFNGGPGCSSLGGLFEELGPFYVNFDGQTLYENPYAWNAKANVLYLESPIGVGYSYDTTTPGYFQANDDQSAAQNYQALTNFFNVAQPKYTNRTFYLSGESYAGIYIPMLTDLIVQGINNPNQPFPNKNFQGSAIGNGFMNVAGLLNALTLWSAYHGRVSEQNWADIKANCSKGADVDSFDFSQFTTSQNKIDYVGDGSYCGNLIQPLISQNALGNEGFDQYNFYQECYDKSVFQAPPPAGGKRHKRSAMQGVSSVQKNLQYQQLGNFQGTSNLAKNTATLVNRFSNDNQFGYFCWNEDAVSKYLNSDNVQNALNIPQAWKDQKNTWEDCRMSIYNNYTLKYNTTNRFFNNIITNLTTDFRFLIYNGDVDTVCNYLGDAKHILQVAKDNGLTSGPRTPWYYSNNQQLAGYVQTYSGKNKNNAMITIDLLTVKGAGHMVPYDRAGPSVQMISNFVWAPKNVVINYTSQDNFNPNIQLSDLVDSGSSSTVAFFISMFAVLLNIVF.

An N-terminal signal peptide occupies residues Met-1–Gly-19. Residues Asn-48 and Asn-163 are each glycosylated (N-linked (GlcNAc...) asparagine). Residue Ser-172 is part of the active site. N-linked (GlcNAc...) asparagine glycans are attached at residues Asn-241, Asn-408, Asn-414, and Asn-426. Residues Asp-441 and His-507 contribute to the active site. N-linked (GlcNAc...) asparagine glycosylation occurs at Asn-534.

The protein belongs to the peptidase S10 family.

This is Serine carboxypeptidase ctsa-3.1 from Caenorhabditis elegans.